The following is a 210-amino-acid chain: Resolvase (210 aa).

Positions 6–150 constitute a Resolvase/invertase-type recombinase catalytic domain; the sequence is VARVYLRVSS…EDRRERQRQG (145 aa). The O-(5'-phospho-DNA)-serine intermediate role is filled by Ser14. A DNA-binding region (H-T-H motif) is located at residues 191 to 210; sequence GVSVSQVKRVWAQNQTKDKV.

The protein belongs to the site-specific recombinase resolvase family.

In terms of biological role, site-specific recombination protein. The polypeptide is Resolvase (stbA) (Pseudomonas syringae pv. tomato).